The chain runs to 262 residues: Nurim (262 aa).

Topologically, residues 1–4 (MAPA) are nuclear. A helical transmembrane segment spans residues 5-28 (LLLIPAALASFILAFGTGVEFVRF). Residues 29–58 (TSLRPLLGGIPESGGPDARQGWLAALQDRS) lie on the Perinuclear space side of the membrane. Residues 59-80 (ILAPLAWDLGLLLLFVGQHSLM) form a helical membrane-spanning segment. Residues 81-97 (AAERVKAWTSRYFGVLQ) lie on the Nuclear side of the membrane. Residues 98 to 114 (RSLYVACTALALQLVMR) form a helical membrane-spanning segment. Residues 115-133 (YWEPIPKGPVLWEARAEPW) are Perinuclear space-facing. The chain crosses the membrane as a helical span at residues 134–164 (ATWVPLLCFVLHVISWLLIFSILLVFDYAEL). Residues 165 to 191 (MGLKQVYYHVLGLGEPLALKSPRALRL) lie on the Nuclear side of the membrane. The helical transmembrane segment at 192–210 (FSHLRHPVCVELLTVLWVV) threads the bilayer. Residues 211 to 216 (PTLGTD) lie on the Perinuclear space side of the membrane. The helical transmembrane segment at 217-234 (RLLLAFLLTLYLGLAHGL) threads the bilayer. At 235 to 262 (DQQDLRYLRAQLQRKLHLLSRPQDGEAE) the chain is on the nuclear side.

It belongs to the nurim family.

Its subcellular location is the nucleus inner membrane. This chain is Nurim (NRM), found in Homo sapiens (Human).